Consider the following 578-residue polypeptide: MCGILAVLGCVDNSQAKRSRIIELSRRLRHRGPDWSGLHCYEDCYLAHERLAIVDPTSGDQPLYNEDKTIAVTVNGEIYNHKALRENLKSHQFRTGSDCEVIAHLYEEHGEEFVDMLDGMFAFVLLDTRDKSFIAARDAIGITPLYIGWGLDGSVWFASEMKALSDDCEQFMCFPPGHIYSSKQGGLRRWYNPPWFSEVVPSTPYDPLVVRNTFEKAVIKRLMTDVPFGVLLSGGLDSSLVASVALRHLEKSEAACQWGSKLHTFCIGLKGSPDLKAGREVADYLGTRHHELHFTVQDGIDAIEEVIYHVETYDVTTIRASTPMFLMSRKIKSLGVKMVLSGEGSDEIFGGYLYFHKAPNKKEFHEETCRKIKALHQYDCLRANKSTSAWGVEARVPFLDKEFINVAMSIDPEWKMIRPDLGRIEKWVLRNAFDDEKNPYLPKHILYRQKEQFSDGVGYSWIDGLKDHANKHVSETMLMNASFVFPDNTPLTKEAYYYRTIFEKFFPKSAARATVPGGPSVACSTAKAVEWDAAWSQNLDPSGRAALGVHVSAYGEDKTEDSRPEKLQKLAEKTPAIV.

Cys2 functions as the For GATase activity in the catalytic mechanism. Positions 2-185 constitute a Glutamine amidotransferase type-2 domain; it reads CGILAVLGCV…PGHIYSSKQG (184 aa). Residues 50-54, 75-77, and Asp98 contribute to the L-glutamine site; these read RLAIV and NGE. The Asparagine synthetase domain maps to 210–450; it reads VRNTFEKAVI…LPKHILYRQK (241 aa). ATP-binding positions include Leu231, Ile267, and 341–342; that span reads SG. Positions 555–572 are enriched in basic and acidic residues; it reads GEDKTEDSRPEKLQKLAE. A disordered region spans residues 555–578; that stretch reads GEDKTEDSRPEKLQKLAEKTPAIV.

It carries out the reaction L-aspartate + L-glutamine + ATP + H2O = L-asparagine + L-glutamate + AMP + diphosphate + H(+). It participates in amino-acid biosynthesis; L-asparagine biosynthesis. Functionally, essential for nitrogen assimilation, distribution and remobilization within the plant via the phloem. The sequence is that of Asparagine synthetase [glutamine-hydrolyzing] 3 (ASN3) from Arabidopsis thaliana (Mouse-ear cress).